The primary structure comprises 279 residues: Zinc finger CCCH domain-containing protein 1 (279 aa).

The tract at residues 20 to 45 (DVIVLSPGPPARRRPPPVKAVEPESG) is disordered. 2 consecutive C3H1-type zinc fingers follow at residues 56-84 (FYKTRVCETFVTSGRCMFEDGCTFAHGDE) and 139-167 (RAITKVCFEFRDKGICYFGETCAFPHVSA).

The protein is Zinc finger CCCH domain-containing protein 1 of Oryza sativa subsp. japonica (Rice).